The sequence spans 427 residues: Trigger factor (427 aa).

Residues 163–248 form the PPIase FKBP-type domain; it reads GDTVVIDFVG…IHEVKAKEVP (86 aa).

The protein belongs to the FKBP-type PPIase family. Tig subfamily.

The protein localises to the cytoplasm. It carries out the reaction [protein]-peptidylproline (omega=180) = [protein]-peptidylproline (omega=0). Its function is as follows. Involved in protein export. Acts as a chaperone by maintaining the newly synthesized protein in an open conformation. Functions as a peptidyl-prolyl cis-trans isomerase. The protein is Trigger factor of Streptococcus suis (strain 98HAH33).